Here is a 328-residue protein sequence, read N- to C-terminus: Carbonic anhydrase-related protein 11 (328 aa).

A signal peptide spans 1-23; it reads MGAAPRLSAPRVLVLWAALGAAA. One can recognise an Alpha-carbonic anhydrase domain in the interval 33–303; it reads DWWSYKDNLQ…LAHRALRGNR (271 aa). Asn-118 is a glycosylation site (N-linked (GlcNAc...) asparagine). The tract at residues 300 to 328 is disordered; it reads RGNRDPRHPERRCRGPNYRLHVDDVPHGL. The segment covering 319–328 has biased composition (basic and acidic residues); that stretch reads LHVDDVPHGL.

This sequence belongs to the alpha-carbonic anhydrase family.

The protein resides in the secreted. Functionally, does not have a catalytic activity. The chain is Carbonic anhydrase-related protein 11 (CA11) from Ovis aries (Sheep).